The chain runs to 900 residues: UPF0182 protein Ppro_3567 (900 aa).

The next 7 helical transmembrane spans lie at 15–35 (FFPLLILVSVLLSLISYLLNL), 60–80 (GAGLLFGGLLFLFVQINLHVA), 112–132 (VSMLVSFVLALLAGNLGAMKW), 174–194 (FIILAAAALATAVYYVRGGIL), 210–230 (LAVLVGIFACAVAAGFYLDSF), 257–277 (VLTFLTPLAGAMLAIGIWKGV), and 282–302 (LLAPAIVVALYMLGIRVYPGV).

The protein belongs to the UPF0182 family.

It localises to the cell membrane. The sequence is that of UPF0182 protein Ppro_3567 from Pelobacter propionicus (strain DSM 2379 / NBRC 103807 / OttBd1).